The sequence spans 147 residues: Basic phospholipase A2 beta-bungarotoxin A1 chain (147 aa).

An N-terminal signal peptide occupies residues 1 to 19 (MNPAHLLVLSAVCVSLLGA). Positions 20 to 27 (ANIPPHPL) are excised as a propeptide. Intrachain disulfides connect cysteine 54–cysteine 146, cysteine 56–cysteine 72, cysteine 71–cysteine 127, cysteine 78–cysteine 120, cysteine 88–cysteine 113, and cysteine 106–cysteine 118. Positions 55, 57, and 59 each coordinate Ca(2+). Histidine 75 is a catalytic residue. Aspartate 76 provides a ligand contact to Ca(2+). Aspartate 121 is an active-site residue.

The protein belongs to the phospholipase A2 family. Group I subfamily. D49 sub-subfamily. In terms of assembly, heterodimer; disulfide-linked. The A chains have phospholipase A2 activity and the B chains show homology with the basic protease inhibitors. The A1 chain is found in beta-1 and beta-2 bungarotoxins. Ca(2+) serves as cofactor. As to expression, expressed by the venom gland.

The protein localises to the secreted. The enzyme catalyses a 1,2-diacyl-sn-glycero-3-phosphocholine + H2O = a 1-acyl-sn-glycero-3-phosphocholine + a fatty acid + H(+). Snake venom phospholipase A2 (PLA2) that inhibits neuromuscular transmission by blocking acetylcholine release from the nerve termini. PLA2 catalyzes the calcium-dependent hydrolysis of the 2-acyl groups in 3-sn-phosphoglycerides. The chain is Basic phospholipase A2 beta-bungarotoxin A1 chain from Bungarus multicinctus (Many-banded krait).